We begin with the raw amino-acid sequence, 253 residues long: Sulfur carrier protein FdhD (253 aa).

Catalysis depends on Cys-100, which acts as the Cysteine persulfide intermediate.

The protein belongs to the FdhD family.

It is found in the cytoplasm. Functionally, required for formate dehydrogenase (FDH) activity. Acts as a sulfur carrier protein that transfers sulfur from IscS to the molybdenum cofactor prior to its insertion into FDH. This is Sulfur carrier protein FdhD from Sulfolobus acidocaldarius (strain ATCC 33909 / DSM 639 / JCM 8929 / NBRC 15157 / NCIMB 11770).